Reading from the N-terminus, the 577-residue chain is MDSDYSDKKGVSVLMDLFEMKGIRKLVMSPGSRNAPLLFSFSRNPAFEKYVIADERSAGFFALGLALASGEAVGLVCTSGTAMLNYAPAVAEAFYRGIPLVAVTADRPAEWIDQDEGQTIRQEGAMAGFVKSYCSLRAEFDTSASAWYANRRLNEVLNHALMPRRGPVHINMSFCEPLYGTSSGYSGKERAITFVRERQELPEEVWDMLVKRFLEAPRVMIVAGFYPPDEDVSAALQDICKFPHTVLFAESLSNIRTDTGICTADRVLAAAGEDESLYPELLISFGGSLISRMLKTFLRRAKPAEHWGIDERFPAPDTFCALTHHICTGASGFWKEFAGRLKDKAPESLSPEGISYAGSWQKIKRKADLLHRTFMADAGWSDLKAFEVILRHIPHDAALHAANSTPVRYLQLFEHAHYAGGEWSNRGTNGIEGATSTAMGFSEVYSGTTLLITGDLSFMYDSNALWMPYVNGRIRVIVMRNGGGGIFRFIPGPDSLKELETCFETPLEVPVREMAGAYGWRYMKAVSAEELETVLPSFFASGDRAVLLEVETPRFENAPVLKSYFTYISGESYPVNR.

Belongs to the TPP enzyme family. MenD subfamily. As to quaternary structure, homodimer. Mg(2+) is required as a cofactor. Mn(2+) serves as cofactor. The cofactor is thiamine diphosphate.

The enzyme catalyses isochorismate + 2-oxoglutarate + H(+) = 5-enolpyruvoyl-6-hydroxy-2-succinyl-cyclohex-3-ene-1-carboxylate + CO2. Its pathway is quinol/quinone metabolism; 1,4-dihydroxy-2-naphthoate biosynthesis; 1,4-dihydroxy-2-naphthoate from chorismate: step 2/7. It functions in the pathway quinol/quinone metabolism; menaquinone biosynthesis. Catalyzes the thiamine diphosphate-dependent decarboxylation of 2-oxoglutarate and the subsequent addition of the resulting succinic semialdehyde-thiamine pyrophosphate anion to isochorismate to yield 2-succinyl-5-enolpyruvyl-6-hydroxy-3-cyclohexene-1-carboxylate (SEPHCHC). In Porphyromonas gingivalis (strain ATCC BAA-308 / W83), this protein is 2-succinyl-5-enolpyruvyl-6-hydroxy-3-cyclohexene-1-carboxylate synthase.